The primary structure comprises 156 residues: Putative pre-16S rRNA nuclease (156 aa).

It belongs to the YqgF nuclease family.

The protein resides in the cytoplasm. In terms of biological role, could be a nuclease involved in processing of the 5'-end of pre-16S rRNA. The chain is Putative pre-16S rRNA nuclease from Ehrlichia chaffeensis (strain ATCC CRL-10679 / Arkansas).